We begin with the raw amino-acid sequence, 472 residues long: MVKIGLEVHVHLTSLKTKLFCSCPTEYVGKDPNTITCPVCLGLPGAIPVLNENAVRAAIMVALAINAEIADRVVMVRKHYFYPDMAKNYQISQYDGPGSIAISKGGFIKLRDNKTIRIRRINIEEDPAKIVYPTGSMLTSRYTLLDYNRSGFPLLEIVTEPDMSDPREAREFLEKLRSILEHLGISNPDLEGAMRADANISIEGGERVEIKNIGSPKEVEEALKYEIARQKALVAQGMKVNRETRHWDNAKKVTVLTRSKELEEDYRYFPDPDLPPYTVSFDMIEKIRKELPELPDIRIQRLVKEYGITEYDANVLVIDKSLADLFEETAKNYKNYKKLVNILINDYLRWLNDKNLKPSQSKATTKHLIELLTLLDNGTITIKIAKEILPQIVIEGKMPSEIIKQNSLIAIKDEDYLINVIKEVLSEEKDAVEKAKRDPKVINYLVGKVMKKTSKRADPYIVNELIKKELGI.

Belongs to the GatB/GatE family. GatB subfamily. As to quaternary structure, heterotrimer of A, B and C subunits.

The enzyme catalyses L-glutamyl-tRNA(Gln) + L-glutamine + ATP + H2O = L-glutaminyl-tRNA(Gln) + L-glutamate + ADP + phosphate + H(+). It carries out the reaction L-aspartyl-tRNA(Asn) + L-glutamine + ATP + H2O = L-asparaginyl-tRNA(Asn) + L-glutamate + ADP + phosphate + 2 H(+). In terms of biological role, allows the formation of correctly charged Asn-tRNA(Asn) or Gln-tRNA(Gln) through the transamidation of misacylated Asp-tRNA(Asn) or Glu-tRNA(Gln) in organisms which lack either or both of asparaginyl-tRNA or glutaminyl-tRNA synthetases. The reaction takes place in the presence of glutamine and ATP through an activated phospho-Asp-tRNA(Asn) or phospho-Glu-tRNA(Gln). This is Aspartyl/glutamyl-tRNA(Asn/Gln) amidotransferase subunit B from Sulfolobus acidocaldarius (strain ATCC 33909 / DSM 639 / JCM 8929 / NBRC 15157 / NCIMB 11770).